The primary structure comprises 1509 residues: DNA polymerase alpha catalytic subunit (1509 aa).

A disordered region spans residues 1–162; it reads MNRPKREKKS…KKTKEKKNEI (162 aa). Basic and acidic residues-rich tracts occupy residues 21–35 and 42–79; these read EQIK…RTDQ and ERKR…RETS. Positions 27–67 form a coiled coil; it reads RDGEKRTDQLQEEDDERKRLEQLKEQETEFDKEERKRKNRD. Residues 80-123 show a composition bias toward acidic residues; the sequence is DNEDEDEDEDDDGDNSDDDYSLDEDDEDGGGDGENNDSDQEEAI. A compositionally biased stretch (basic residues) spans 127-137; sequence RKKKRQVKKKS. The span at 138-147 shows a compositional bias: basic and acidic residues; the sequence is KKDENGEPKV. Basic residues predominate over residues 148–157; it reads KTPRVKKTKE. Coiled-coil stretches lie at residues 234-263 and 958-989; these read APDS…LLNK and LHGL…IQQQ. Residues C1328, C1331, C1355, C1358, C1389, C1392, C1406, and C1411 each contribute to the Zn(2+) site. A CysA-type zinc finger spans residues 1328-1358; it reads CPYCGQNNEFTGIVKIDSEGKSESGFDCNQC. Positions 1389–1411 match the CysB motif motif; sequence CTECEKVSKNYKETSYRCARPQC.

Belongs to the DNA polymerase type-B family.

The protein resides in the nucleus. The catalysed reaction is DNA(n) + a 2'-deoxyribonucleoside 5'-triphosphate = DNA(n+1) + diphosphate. Polymerase alpha in a complex with DNA primase is a replicative polymerase. The chain is DNA polymerase alpha catalytic subunit (pola1) from Dictyostelium discoideum (Social amoeba).